We begin with the raw amino-acid sequence, 573 residues long: Probable D-xylulose kinase A (573 aa).

H97, R168, D284, and N285 together coordinate substrate. ATP contacts are provided by residues W366, 471–472, and N475; that span reads GG.

It belongs to the FGGY kinase family.

It localises to the cytoplasm. It carries out the reaction D-xylulose + ATP = D-xylulose 5-phosphate + ADP + H(+). In terms of biological role, highly specific D-xylulose kinase which participates in the catabolism of xylose. Xylose is a major component of hemicelluloses such as xylan. Most fungi utilize D-xylose via three enzymatic reactions, xylose reductase (XR), xylitol dehydrogenase (XDH), and xylulokinase, to form xylulose 5-phosphate, which enters pentose phosphate pathway. The polypeptide is Probable D-xylulose kinase A (xkiA) (Aspergillus clavatus (strain ATCC 1007 / CBS 513.65 / DSM 816 / NCTC 3887 / NRRL 1 / QM 1276 / 107)).